The chain runs to 245 residues: 1-(5-phosphoribosyl)-5-[(5-phosphoribosylamino)methylideneamino] imidazole-4-carboxamide isomerase (245 aa).

The active-site Proton acceptor is the Asp-11. Asp-132 functions as the Proton donor in the catalytic mechanism.

It belongs to the HisA/HisF family.

It localises to the cytoplasm. It carries out the reaction 1-(5-phospho-beta-D-ribosyl)-5-[(5-phospho-beta-D-ribosylamino)methylideneamino]imidazole-4-carboxamide = 5-[(5-phospho-1-deoxy-D-ribulos-1-ylimino)methylamino]-1-(5-phospho-beta-D-ribosyl)imidazole-4-carboxamide. It functions in the pathway amino-acid biosynthesis; L-histidine biosynthesis; L-histidine from 5-phospho-alpha-D-ribose 1-diphosphate: step 4/9. In Xanthobacter autotrophicus (strain ATCC BAA-1158 / Py2), this protein is 1-(5-phosphoribosyl)-5-[(5-phosphoribosylamino)methylideneamino] imidazole-4-carboxamide isomerase.